Consider the following 106-residue polypeptide: Urease subunit beta (106 aa).

It belongs to the urease beta subunit family. Heterotrimer of UreA (gamma), UreB (beta) and UreC (alpha) subunits. Three heterotrimers associate to form the active enzyme.

It localises to the cytoplasm. The catalysed reaction is urea + 2 H2O + H(+) = hydrogencarbonate + 2 NH4(+). The protein operates within nitrogen metabolism; urea degradation; CO(2) and NH(3) from urea (urease route): step 1/1. The chain is Urease subunit beta from Synechococcus sp. (strain WH7805).